The chain runs to 212 residues: Adenine phosphoribosyltransferase (212 aa).

It belongs to the purine/pyrimidine phosphoribosyltransferase family. Homodimer.

It is found in the cytoplasm. The catalysed reaction is AMP + diphosphate = 5-phospho-alpha-D-ribose 1-diphosphate + adenine. The protein operates within purine metabolism; AMP biosynthesis via salvage pathway; AMP from adenine: step 1/1. Catalyzes a salvage reaction resulting in the formation of AMP, that is energically less costly than de novo synthesis. This chain is Adenine phosphoribosyltransferase, found in Mycobacterium tuberculosis (strain CDC 1551 / Oshkosh).